A 63-amino-acid polypeptide reads, in one-letter code: Large ribosomal subunit protein uL29 (63 aa).

It belongs to the universal ribosomal protein uL29 family.

The protein is Large ribosomal subunit protein uL29 of Shigella flexneri.